A 496-amino-acid polypeptide reads, in one-letter code: Probable CtpA-like serine protease (496 aa).

A compositionally biased stretch (basic and acidic residues) spans 1 to 16; sequence MDDKQHTSSSDDERAE. Residues 1 to 27 form a disordered region; sequence MDDKQHTSSSDDERAEIATSNQDQETN. A compositionally biased stretch (polar residues) spans 18 to 27; sequence ATSNQDQETN. A helical membrane pass occupies residues 39–59; the sequence is FISILIGTILITAVITVVAYI. Residues 124–206 form the PDZ domain; the sequence is TKSFNEGVSG…TEVTLTVQRG (83 aa). Catalysis depends on charge relay system residues Ser329, Asp340, and Lys354.

It belongs to the peptidase S41A family.

The protein localises to the cell membrane. This is Probable CtpA-like serine protease from Staphylococcus aureus (strain MSSA476).